A 370-amino-acid chain; its full sequence is Muconate cycloisomerase 1 (370 aa).

K166 is an active-site residue. Positions 195, 221, and 246 each coordinate Mn(2+).

This sequence belongs to the mandelate racemase/muconate lactonizing enzyme family. In terms of assembly, homooctamer. Mn(2+) serves as cofactor.

It catalyses the reaction (S)-muconolactone = cis,cis-muconate + H(+). The protein operates within aromatic compound metabolism; beta-ketoadipate pathway; 5-oxo-4,5-dihydro-2-furylacetate from catechol: step 2/3. Its function is as follows. Catalyzes a syn cycloisomerization. In Acinetobacter baylyi (strain ATCC 33305 / BD413 / ADP1), this protein is Muconate cycloisomerase 1 (catB).